Here is a 483-residue protein sequence, read N- to C-terminus: Cobyric acid synthase (483 aa).

The 187-residue stretch at 248–434 (ALRVVVPVLP…LHGLFEQPSA (187 aa)) folds into the GATase cobBQ-type domain. C329 (nucleophile) is an active-site residue. H426 is an active-site residue.

It belongs to the CobB/CobQ family. CobQ subfamily.

It functions in the pathway cofactor biosynthesis; adenosylcobalamin biosynthesis. Functionally, catalyzes amidations at positions B, D, E, and G on adenosylcobyrinic A,C-diamide. NH(2) groups are provided by glutamine, and one molecule of ATP is hydrogenolyzed for each amidation. In Ectopseudomonas mendocina (strain ymp) (Pseudomonas mendocina), this protein is Cobyric acid synthase.